The following is a 418-amino-acid chain: NADH-quinone oxidoreductase subunit D (418 aa).

It belongs to the complex I 49 kDa subunit family. In terms of assembly, NDH-1 is composed of 14 different subunits. Subunits NuoB, C, D, E, F, and G constitute the peripheral sector of the complex.

The protein localises to the cell inner membrane. It carries out the reaction a quinone + NADH + 5 H(+)(in) = a quinol + NAD(+) + 4 H(+)(out). In terms of biological role, NDH-1 shuttles electrons from NADH, via FMN and iron-sulfur (Fe-S) centers, to quinones in the respiratory chain. The immediate electron acceptor for the enzyme in this species is believed to be ubiquinone. Couples the redox reaction to proton translocation (for every two electrons transferred, four hydrogen ions are translocated across the cytoplasmic membrane), and thus conserves the redox energy in a proton gradient. This chain is NADH-quinone oxidoreductase subunit D, found in Neisseria gonorrhoeae (strain ATCC 700825 / FA 1090).